The sequence spans 36 residues: Pancreatic polypeptide (36 aa).

At tyrosine 36 the chain carries Tyrosine amide.

Belongs to the NPY family.

It localises to the secreted. Hormone secreted by pancreatic cells that acts as a regulator of pancreatic and gastrointestinal functions probably by signaling through the G protein-coupled receptor NPY4R2. This is Pancreatic polypeptide (PPY) from Tapirus pinchaque (Mountain tapir).